The chain runs to 289 residues: Energy-coupling factor transporter ATP-binding protein EcfA2 (289 aa).

Residues 3–246 form the ABC transporter domain; sequence IQAKKLNYTY…PEWLKNHHLN (244 aa). 40-47 provides a ligand contact to ATP; that stretch reads GHTGSGKS.

Belongs to the ABC transporter superfamily. Energy-coupling factor EcfA family. As to quaternary structure, forms a stable energy-coupling factor (ECF) transporter complex composed of 2 membrane-embedded substrate-binding proteins (S component), 2 ATP-binding proteins (A component) and 2 transmembrane proteins (T component).

It localises to the cell membrane. Its function is as follows. ATP-binding (A) component of a common energy-coupling factor (ECF) ABC-transporter complex. Unlike classic ABC transporters this ECF transporter provides the energy necessary to transport a number of different substrates. This is Energy-coupling factor transporter ATP-binding protein EcfA2 from Ligilactobacillus salivarius (strain UCC118) (Lactobacillus salivarius).